The primary structure comprises 247 residues: MDDIRKIERLAAASWPAYFQKSIGKWLLRANFGVTKRANSVWTSADMPEGDFQLEAELFYQSLGLPVCFHISNASPKGLDDALADSRYEKVDECFQMTALCRSIMSRTNDNSRFTYKWEQEPSSVWIDEFIQLEGFSPERHKGYKHIFERMPPCKTFFKMYDKESLTALGTVSVIDGYGGLSNIVVAEEHRGKGAGTQVIRVLTEWAKNNGAERMFLQVMKENLAAVSLYGKIGFSPISEHHYRIKR.

The region spanning 102-247 is the N-acetyltransferase domain; sequence RSIMSRTNDN…ISEHHYRIKR (146 aa).

The protein belongs to the acetyltransferase family.

This is an uncharacterized protein from Bacillus subtilis (strain 168).